A 205-amino-acid polypeptide reads, in one-letter code: Pyrrolidone-carboxylate peptidase (205 aa).

Catalysis depends on residues E79, C142, and H165.

The protein belongs to the peptidase C15 family. In terms of assembly, homotetramer.

It localises to the cytoplasm. The enzyme catalyses Release of an N-terminal pyroglutamyl group from a polypeptide, the second amino acid generally not being Pro.. Its function is as follows. Removes 5-oxoproline from various penultimate amino acid residues except L-proline. The polypeptide is Pyrrolidone-carboxylate peptidase (Gloeobacter violaceus (strain ATCC 29082 / PCC 7421)).